The chain runs to 89 residues: UPF0367 protein P9515_01381 (89 aa).

It belongs to the UPF0367 family.

This is UPF0367 protein P9515_01381 from Prochlorococcus marinus (strain MIT 9515).